The sequence spans 251 residues: PF03932 family protein CutC (251 aa).

It belongs to the CutC family.

The protein resides in the cytoplasm. The sequence is that of PF03932 family protein CutC from Agrobacterium fabrum (strain C58 / ATCC 33970) (Agrobacterium tumefaciens (strain C58)).